A 458-amino-acid polypeptide reads, in one-letter code: Na(+)/H(+) antiporter NhaA (458 aa).

The next 12 membrane-spanning stretches (helical) occupy residues 27–47 (FLHV…AALI), 78–98 (LHFW…GMEI), 114–134 (ILPI…YLSF), 143–163 (GWAV…ALLG), 172–192 (VILL…IAFF), 201–221 (GLAI…IGLA), 222–242 (SAWL…ITGV), 249–269 (VILG…PLTI), 316–336 (PWVA…VSFA), 346–366 (FLVV…GIIT), 388–408 (ILLI…VSML), and 421–441 (IGVL…GLIY).

Belongs to the NhaA Na(+)/H(+) (TC 2.A.33) antiporter family.

It localises to the cell inner membrane. The catalysed reaction is Na(+)(in) + 2 H(+)(out) = Na(+)(out) + 2 H(+)(in). Its function is as follows. Na(+)/H(+) antiporter that extrudes sodium in exchange for external protons. This is Na(+)/H(+) antiporter NhaA from Bartonella quintana (strain Toulouse) (Rochalimaea quintana).